Here is a 123-residue protein sequence, read N- to C-terminus: Large ribosomal subunit protein bL19 (123 aa).

This sequence belongs to the bacterial ribosomal protein bL19 family.

In terms of biological role, this protein is located at the 30S-50S ribosomal subunit interface and may play a role in the structure and function of the aminoacyl-tRNA binding site. In Ureaplasma parvum serovar 3 (strain ATCC 27815 / 27 / NCTC 11736), this protein is Large ribosomal subunit protein bL19.